Consider the following 81-residue polypeptide: Three-finger toxin 3FTx-Oxy6 (81 aa).

Positions methionine 1 to threonine 21 are cleaved as a signal peptide. Cystine bridges form between cysteine 24–cysteine 43, cysteine 36–cysteine 61, cysteine 65–cysteine 73, and cysteine 74–cysteine 79.

It belongs to the three-finger toxin family. Short-chain subfamily. Expressed by the venom gland.

It localises to the secreted. In Oxyuranus microlepidotus (Inland taipan), this protein is Three-finger toxin 3FTx-Oxy6.